Here is a 386-residue protein sequence, read N- to C-terminus: Cytochrome b (386 aa).

A run of 4 helical transmembrane segments spans residues 32–52 (FGSL…TLAM), 76–98 (WLIR…LHVG), 113–133 (TWII…LGYV), and 179–199 (FFAL…MHLI). Heme b contacts are provided by His82 and His96. The heme b site is built by His183 and His197. His202 contributes to the a ubiquinone binding site. The next 4 membrane-spanning stretches (helical) occupy residues 226–246 (YIFK…LFVF), 290–310 (LLGV…PITD), 322–342 (LSKV…QLGA), and 349–369 (FIEF…VIMP).

Belongs to the cytochrome b family. In terms of assembly, fungal cytochrome b-c1 complex contains 10 subunits; 3 respiratory subunits, 2 core proteins and 5 low-molecular weight proteins. Cytochrome b-c1 complex is a homodimer. The cofactor is heme b.

It localises to the mitochondrion inner membrane. Its function is as follows. Component of the ubiquinol-cytochrome c reductase complex (complex III or cytochrome b-c1 complex) that is part of the mitochondrial respiratory chain. The b-c1 complex mediates electron transfer from ubiquinol to cytochrome c. Contributes to the generation of a proton gradient across the mitochondrial membrane that is then used for ATP synthesis. This is Cytochrome b (cob) from Talaromyces marneffei (Penicillium marneffei).